The sequence spans 340 residues: Delta(1)-pyrroline-2-carboxylate reductase 1 (340 aa).

Serine 50 acts as the Charge relay system in catalysis. Histidine 51 functions as the Proton donor in the catalytic mechanism. Arginine 55 contributes to the substrate binding site. Residue 123-127 (HFSAL) coordinates NADP(+). Threonine 163 contributes to the substrate binding site. 181–183 (DFA) is a binding site for NADP(+). Position 189–190 (189–190 (RG)) interacts with substrate. Aspartate 191 functions as the Charge relay system in the catalytic mechanism. NADP(+) contacts are provided by residues 232 to 233 (HK) and 307 to 313 (RLPSQRR).

Belongs to the LDH2/MDH2 oxidoreductase family. In terms of assembly, homodimer.

It carries out the reaction L-proline + NAD(+) = 1-pyrroline-2-carboxylate + NADH + H(+). The enzyme catalyses L-proline + NADP(+) = 1-pyrroline-2-carboxylate + NADPH + H(+). Functionally, catalyzes the reduction of Delta(1)-pyrroline-2-carboxylate (Pyr2C) to L-proline, using NADPH as the electron donor. May be involved in a degradation pathway that converts trans-3-hydroxy-L-proline (t3LHyp) to L-proline. This chain is Delta(1)-pyrroline-2-carboxylate reductase 1, found in Burkholderia ambifaria (strain ATCC BAA-244 / DSM 16087 / CCUG 44356 / LMG 19182 / AMMD) (Burkholderia cepacia (strain AMMD)).